The sequence spans 251 residues: 16S rRNA (guanine(1405)-N(7))-methyltransferase (251 aa).

S-adenosyl-L-methionine contacts are provided by residues tyrosine 56, 81–83, arginine 87, alanine 111, aspartate 131, 157–158, phenylalanine 173, and glutamate 182; these read HAS and DV.

The protein belongs to the methyltransferase superfamily. Aminoglycoside resistance family.

The enzyme catalyses guanosine(1405) in 16S rRNA + S-adenosyl-L-methionine = N(7)-methylguanosine(1405) in 16S rRNA + S-adenosyl-L-homocysteine. Its function is as follows. Specifically methylates the N(7) position of guanine 1405 in 16S rRNA. Confers resistance to various aminoglycosides, including kanamycin, tobramycin, amikacin, arbekacin, gentamicin, sisomicin and isepamicin. This Serratia marcescens protein is 16S rRNA (guanine(1405)-N(7))-methyltransferase (rmtB).